Here is a 234-residue protein sequence, read N- to C-terminus: Thrombin-like enzyme contortrixobin (234 aa).

A Peptidase S1 domain is found at 1 to 225; that stretch reads VVGGDECNIN…YNDWIQSIIA (225 aa). 6 disulfide bridges follow: Cys7-Cys139, Cys26-Cys42, Cys74-Cys232, Cys118-Cys186, Cys150-Cys165, and Cys176-Cys201. Active-site charge relay system residues include His41 and Asp86. The active-site Charge relay system is the Ser180.

Monomer. In terms of processing, not glycosylated. As to expression, expressed by the venom gland.

Its subcellular location is the secreted. Strongly inhibited by diisopropylfluorophosphate (DFP) and to a lesser extent by PMSF, benzamidine and 4,6-diamidino-2-phenylindole. Low inhibition by hirudin. Thrombin-like snake venom serine protease that cleaves beta chain of fibrinogen (FGB), releasing fibrinopeptide B. Has a coagulant activity activating blood coagulation factors V (F5) and XIII (F13A1). The protein is Thrombin-like enzyme contortrixobin of Agkistrodon contortrix contortrix (Southern copperhead).